A 400-amino-acid chain; its full sequence is uncharacterized protein (400 aa).

Belongs to the mimivirus R640 family.

The protein localises to the virion. This is an uncharacterized protein from Acanthamoeba polyphaga (Amoeba).